A 475-amino-acid polypeptide reads, in one-letter code: Ribulose bisphosphate carboxylase large chain (475 aa).

Residues 1-2 (MS) constitute a propeptide that is removed on maturation. Position 3 is an N-acetylproline (Pro-3). The residue at position 14 (Lys-14) is an N6,N6,N6-trimethyllysine. Lys-175 (proton acceptor) is an active-site residue. D-ribulose 1,5-bisphosphate contacts are provided by Lys-175 and Lys-177. Lys-201, Asp-203, and Glu-204 together coordinate Mg(2+). Lys-201 carries the N6-carboxylysine modification. Glu-204 contributes to the D-ribulose 1,5-bisphosphate binding site. The active-site Proton acceptor is the His-294. Residues Arg-295, His-327, Lys-334, Ser-379, Gly-381, Gly-403, and Gly-404 each coordinate D-ribulose 1,5-bisphosphate.

Belongs to the RuBisCO large chain family. Type I subfamily. Heterohexadecamer of 8 large chains and 8 small chains. Heterohexadecamer; disulfide-linked. The disulfide link is formed within the large subunit homodimers. Mg(2+) is required as a cofactor. In terms of processing, the disulfide bond which can form in the large chain dimeric partners within the hexadecamer appears to be associated with oxidative stress and protein turnover.

It is found in the plastid. It localises to the chloroplast. The enzyme catalyses 2 (2R)-3-phosphoglycerate + 2 H(+) = D-ribulose 1,5-bisphosphate + CO2 + H2O. It carries out the reaction D-ribulose 1,5-bisphosphate + O2 = 2-phosphoglycolate + (2R)-3-phosphoglycerate + 2 H(+). Its function is as follows. RuBisCO catalyzes two reactions: the carboxylation of D-ribulose 1,5-bisphosphate, the primary event in carbon dioxide fixation, as well as the oxidative fragmentation of the pentose substrate in the photorespiration process. Both reactions occur simultaneously and in competition at the same active site. Binds to abscisic acid (ABA); only half of the possible binding sites are occupied in the crystal and there are indications this is a low affinity site. In Pisum sativum (Garden pea), this protein is Ribulose bisphosphate carboxylase large chain.